The sequence spans 879 residues: DNA mismatch repair protein MutS (879 aa).

639–646 (GPNMGGKS) serves as a coordination point for ATP.

Belongs to the DNA mismatch repair MutS family.

This protein is involved in the repair of mismatches in DNA. It is possible that it carries out the mismatch recognition step. This protein has a weak ATPase activity. This chain is DNA mismatch repair protein MutS, found in Aromatoleum aromaticum (strain DSM 19018 / LMG 30748 / EbN1) (Azoarcus sp. (strain EbN1)).